Here is an 80-residue protein sequence, read N- to C-terminus: Defensin-like protein 50 (80 aa).

Positions 1-27 are cleaved as a signal peptide; that stretch reads MGFTKIVVTFFLVVMLAVSSSSQNAMA. Cystine bridges form between Cys39–Cys79, Cys43–Cys66, Cys52–Cys77, and Cys56–Cys78.

Belongs to the DEFL family.

The protein resides in the secreted. The polypeptide is Defensin-like protein 50 (LCR49) (Arabidopsis thaliana (Mouse-ear cress)).